Reading from the N-terminus, the 485-residue chain is Probable cobyric acid synthase (485 aa).

A GATase cobBQ-type domain is found at 250 to 435 (EIEIAVIRLP…LHGLFDNKNI (186 aa)). The active-site Nucleophile is Cys328. His427 is a catalytic residue.

It belongs to the CobB/CobQ family. CobQ subfamily.

It functions in the pathway cofactor biosynthesis; adenosylcobalamin biosynthesis. Functionally, catalyzes amidations at positions B, D, E, and G on adenosylcobyrinic A,C-diamide. NH(2) groups are provided by glutamine, and one molecule of ATP is hydrogenolyzed for each amidation. The chain is Probable cobyric acid synthase from Methanosarcina barkeri (strain Fusaro / DSM 804).